Consider the following 196-residue polypeptide: Peroxynitrite isomerase (196 aa).

The GXWXGXG signature appears at 46–52 (GVWRGRG). Histidine 186 contributes to the heme b binding site.

The protein belongs to the nitrobindin family. Homodimer. Heme b serves as cofactor.

The enzyme catalyses peroxynitrite = nitrate. Its pathway is nitrogen metabolism. In terms of biological role, heme-binding protein able to scavenge peroxynitrite and to protect free L-tyrosine against peroxynitrite-mediated nitration, by acting as a peroxynitrite isomerase that converts peroxynitrite to nitrate. Therefore, this protein likely plays a role in peroxynitrite sensing and in the detoxification of reactive nitrogen and oxygen species (RNS and ROS, respectively). Is able to bind nitric oxide (NO) in vitro, but may act as a sensor of peroxynitrite levels in vivo. The protein is Peroxynitrite isomerase of Salinispora tropica (strain ATCC BAA-916 / DSM 44818 / JCM 13857 / NBRC 105044 / CNB-440).